Consider the following 68-residue polypeptide: Large ribosomal subunit protein bL32 (68 aa).

Belongs to the bacterial ribosomal protein bL32 family.

The sequence is that of Large ribosomal subunit protein bL32 from Orientia tsutsugamushi (strain Boryong) (Rickettsia tsutsugamushi).